The following is a 727-amino-acid chain: DNA ligase (727 aa).

NAD(+)-binding positions include 71–75, 120–121, and Glu150; these read DGEFD and SL. Lys152 acts as the N6-AMP-lysine intermediate in catalysis. 4 residues coordinate NAD(+): Arg173, Glu213, Lys329, and Lys353. Cys447, Cys450, Cys466, and Cys472 together coordinate Zn(2+). The BRCT domain occupies 636–725; sequence SIERHLTGLS…PEAAAEAALP (90 aa).

Belongs to the NAD-dependent DNA ligase family. LigA subfamily. Mg(2+) is required as a cofactor. It depends on Mn(2+) as a cofactor.

The enzyme catalyses NAD(+) + (deoxyribonucleotide)n-3'-hydroxyl + 5'-phospho-(deoxyribonucleotide)m = (deoxyribonucleotide)n+m + AMP + beta-nicotinamide D-nucleotide.. Its function is as follows. DNA ligase that catalyzes the formation of phosphodiester linkages between 5'-phosphoryl and 3'-hydroxyl groups in double-stranded DNA using NAD as a coenzyme and as the energy source for the reaction. It is essential for DNA replication and repair of damaged DNA. In Saccharopolyspora erythraea (strain ATCC 11635 / DSM 40517 / JCM 4748 / NBRC 13426 / NCIMB 8594 / NRRL 2338), this protein is DNA ligase.